Consider the following 1454-residue polypeptide: Receptor-type tyrosine-protein phosphatase T (1454 aa).

Positions 1-29 are cleaved as a signal peptide; that stretch reads MGSLGGLALCLLRLLLLGLQRPPLPGAGA. The Extracellular segment spans residues 30–770; the sequence is QSAAGGCSFD…EKQVDNTVKM (741 aa). The MAM domain occupies 34–195; it reads GGCSFDEHYS…VRVLAHPCRK (162 aa). N-linked (GlcNAc...) asparagine glycosylation is found at Asn-82, Asn-102, Asn-141, and Asn-212. In terms of domain architecture, Ig-like C2-type spans 197-288; that stretch reads PHFLRLQNVE…SGVSNYAELI (92 aa). An intrachain disulfide couples Cys-217 to Cys-271. Fibronectin type-III domains follow at residues 295-388, 393-487, and 488-594; these read PIAP…TKCA, GPQN…TEED, and VPGA…SAPS. N-linked (GlcNAc...) asparagine glycans are attached at residues Asn-425, Asn-514, Asn-551, Asn-605, Asn-658, and Asn-688. The 98-residue stretch at 670–767 folds into the Fibronectin type-III 4 domain; it reads AELKPSNLPV…VEPEKQVDNT (98 aa). The helical transmembrane segment at 771-791 threads the bilayer; it reads AGVIAGLLMFIIILLGVMLTI. The Cytoplasmic segment spans residues 792 to 1454; that stretch reads KRRKLAKKQK…EVALEYLSSF (663 aa). The tract at residues 800-852 is disordered; that stretch reads QKETQSGAQREMGPVASTDKPTAKLGTNRNDEGFSSSSQDVNGFTDGSRGELS. Residues 824–841 show a composition bias toward polar residues; it reads LGTNRNDEGFSSSSQDVN. 2 consecutive Tyrosine-protein phosphatase domains span residues 902 to 1156 and 1188 to 1450; these read FKEE…ILEA and IKDE…ALEY. Substrate-binding positions include Asp-1065, 1097-1103, and Gln-1141; that span reads CSAGAGR. The active-site Phosphocysteine intermediate is the Cys-1097. Ser-1221 carries the post-translational modification Phosphoserine. Cys-1391 functions as the Phosphocysteine intermediate in the catalytic mechanism.

Belongs to the protein-tyrosine phosphatase family. Receptor class 2B subfamily. In terms of tissue distribution, expression is restricted to the CNS. Distributed throughout the brain and spinal cord.

Its subcellular location is the membrane. The catalysed reaction is O-phospho-L-tyrosyl-[protein] + H2O = L-tyrosyl-[protein] + phosphate. Functionally, may be involved in both signal transduction and cellular adhesion in the CNS. May have specific signaling roles in the tyrosine phosphorylation/dephosphorylation pathway in the anterior compartment of the adult cerebellar cortex. This is Receptor-type tyrosine-protein phosphatase T (Ptprt) from Mus musculus (Mouse).